The following is a 272-amino-acid chain: NH(3)-dependent NAD(+) synthetase (272 aa).

Residue 43–50 participates in ATP binding; the sequence is GLSGGQDS. Position 49 (Asp49) interacts with Mg(2+). Deamido-NAD(+) is bound at residue Arg138. Thr158 contacts ATP. Residue Glu163 coordinates Mg(2+). Residues Lys171 and Asp178 each coordinate deamido-NAD(+). ATP contacts are provided by Lys187 and Thr209. 258–259 lines the deamido-NAD(+) pocket; sequence HK.

This sequence belongs to the NAD synthetase family. In terms of assembly, homodimer.

It catalyses the reaction deamido-NAD(+) + NH4(+) + ATP = AMP + diphosphate + NAD(+) + H(+). It functions in the pathway cofactor biosynthesis; NAD(+) biosynthesis; NAD(+) from deamido-NAD(+) (ammonia route): step 1/1. Catalyzes the ATP-dependent amidation of deamido-NAD to form NAD. Uses ammonia as a nitrogen source. The polypeptide is NH(3)-dependent NAD(+) synthetase (Halalkalibacterium halodurans (strain ATCC BAA-125 / DSM 18197 / FERM 7344 / JCM 9153 / C-125) (Bacillus halodurans)).